The following is a 59-amino-acid chain: Large ribosomal subunit protein uL30 (59 aa).

Belongs to the universal ribosomal protein uL30 family. In terms of assembly, part of the 50S ribosomal subunit.

The sequence is that of Large ribosomal subunit protein uL30 from Desulforamulus reducens (strain ATCC BAA-1160 / DSM 100696 / MI-1) (Desulfotomaculum reducens).